The chain runs to 329 residues: Cathepsin K (329 aa).

The N-terminal stretch at 1–15 (MWVFKFLLLPMVSFA) is a signal peptide. Residues 16 to 114 (LSPEEMLDTQ…TLYTPEWEGR (99 aa)) constitute a propeptide, activation peptide. N103 is a glycosylation site (N-linked (GlcNAc...) asparagine). Cystine bridges form between C136–C177 and C170–C210. The active site involves C139. N-linked (GlcNAc...) asparagine glycosylation occurs at N213. A disulfide bond links C269 and C318. Residues H276 and N296 contribute to the active site.

This sequence belongs to the peptidase C1 family. As to expression, predominantly expressed in bones. Expressed in thyroid epithelial cells.

Its subcellular location is the lysosome. It is found in the secreted. It localises to the apical cell membrane. The catalysed reaction is Broad proteolytic activity. With small-molecule substrates and inhibitors, the major determinant of specificity is P2, which is preferably Leu, Met &gt; Phe, and not Arg.. In terms of biological role, thiol protease involved in osteoclastic bone resorption. Displays potent endoprotease activity against fibrinogen at acid pH. May play an important role in extracellular matrix degradation. Involved in the release of thyroid hormone thyroxine (T4) by limited proteolysis of TG/thyroglobulin in the thyroid follicle lumen. This is Cathepsin K (Ctsk) from Mus musculus (Mouse).